The primary structure comprises 363 residues: Ribosome-binding ATPase YchF (363 aa).

One can recognise an OBG-type G domain in the interval 3–256; sequence FKCGIVGLPN…LDDEEKVEFL (254 aa). 12-17 provides a ligand contact to ATP; sequence NVGKST. Mg(2+) is bound by residues Ser16 and Thr36. Positions 278-361 constitute a TGS domain; sequence NLQTYFTAGV…QDGDVMHFRF (84 aa).

Mg(2+) is required as a cofactor.

ATPase that binds to both the 70S ribosome and the 50S ribosomal subunit in a nucleotide-independent manner. Does not hydrolyze GTP. In Haemophilus influenzae (strain ATCC 51907 / DSM 11121 / KW20 / Rd), this protein is Ribosome-binding ATPase YchF.